Reading from the N-terminus, the 122-residue chain is Large ribosomal subunit protein uL14 (122 aa).

It belongs to the universal ribosomal protein uL14 family. In terms of assembly, part of the 50S ribosomal subunit. Forms a cluster with proteins L3 and L19. In the 70S ribosome, L14 and L19 interact and together make contacts with the 16S rRNA in bridges B5 and B8.

In terms of biological role, binds to 23S rRNA. Forms part of two intersubunit bridges in the 70S ribosome. This Mycoplasma capricolum subsp. capricolum (strain California kid / ATCC 27343 / NCTC 10154) protein is Large ribosomal subunit protein uL14.